A 302-amino-acid polypeptide reads, in one-letter code: Tyrosine recombinase XerC (302 aa).

One can recognise a Core-binding (CB) domain in the interval 2 to 89; that stretch reads QPLMEQIRAF…AIRSFYRHLL (88 aa). In terms of domain architecture, Tyr recombinase spans 110 to 289; sequence RLPFHLDIDQ…SLDRLMEVYD (180 aa). Catalysis depends on residues R150, K174, H241, R244, and H267. The O-(3'-phospho-DNA)-tyrosine intermediate role is filled by Y276.

It belongs to the 'phage' integrase family. XerC subfamily. As to quaternary structure, forms a cyclic heterotetrameric complex composed of two molecules of XerC and two molecules of XerD.

It localises to the cytoplasm. Site-specific tyrosine recombinase, which acts by catalyzing the cutting and rejoining of the recombining DNA molecules. The XerC-XerD complex is essential to convert dimers of the bacterial chromosome into monomers to permit their segregation at cell division. It also contributes to the segregational stability of plasmids. This Pelobacter propionicus (strain DSM 2379 / NBRC 103807 / OttBd1) protein is Tyrosine recombinase XerC.